The following is a 131-amino-acid chain: Sec-independent protein translocase protein TatB (131 aa).

Residues 2–22 (FDGIGFMELLLIGIVGLVVLG) form a helical membrane-spanning segment. A compositionally biased stretch (polar residues) spans 86–95 (LKEAAQSVNR). The disordered stretch occupies residues 86–131 (LKEAAQSVNRPYQVEDVPAAKDVPAKEMPTSETSTATNANSDKPNG). Over residues 115–131 (TSETSTATNANSDKPNG) the composition is skewed to low complexity.

The protein belongs to the TatB family. The Tat system comprises two distinct complexes: a TatABC complex, containing multiple copies of TatA, TatB and TatC subunits, and a separate TatA complex, containing only TatA subunits. Substrates initially bind to the TatABC complex, which probably triggers association of the separate TatA complex to form the active translocon.

It localises to the cell inner membrane. Functionally, part of the twin-arginine translocation (Tat) system that transports large folded proteins containing a characteristic twin-arginine motif in their signal peptide across membranes. Together with TatC, TatB is part of a receptor directly interacting with Tat signal peptides. TatB may form an oligomeric binding site that transiently accommodates folded Tat precursor proteins before their translocation. This Shewanella halifaxensis (strain HAW-EB4) protein is Sec-independent protein translocase protein TatB.